The sequence spans 312 residues: Ubiquinone biosynthesis O-methyltransferase, mitochondrial (312 aa).

The transit peptide at 1 to 32 (MLLRSRFLKVIHVRKQLSACSRFAIQTQTRCK) directs the protein to the mitochondrion. S-adenosyl-L-methionine contacts are provided by R68, G130, D153, and M196. Residues E197, E200, and H201 each coordinate Mg(2+).

It belongs to the class I-like SAM-binding methyltransferase superfamily. UbiG/COQ3 family. Component of a multi-subunit COQ enzyme complex, composed of at least COQ3, COQ4, COQ5, COQ6, COQ7 and COQ9. Interacts directly with COQ4. It depends on Mg(2+) as a cofactor.

It is found in the mitochondrion inner membrane. It catalyses the reaction 3,4-dihydroxy-5-(all-trans-hexaprenyl)benzoate + S-adenosyl-L-methionine = 4-hydroxy-3-methoxy-5-(all-trans-hexaprenyl)benzoate + S-adenosyl-L-homocysteine + H(+). The catalysed reaction is a 3-demethylubiquinone + S-adenosyl-L-methionine = a ubiquinone + S-adenosyl-L-homocysteine. The enzyme catalyses 3-demethylubiquinol-6 + S-adenosyl-L-methionine = ubiquinol-6 + S-adenosyl-L-homocysteine + H(+). It participates in cofactor biosynthesis; ubiquinone biosynthesis. With respect to regulation, regulated in response to catabolite repression. In terms of biological role, O-methyltransferase required for two non-consecutive steps during ubiquinone biosynthesis. Catalyzes the 2 O-methylation of 3,4-dihydroxy-5-(all-trans-hexaprenyl)benzoic acid into 4-hydroxy-3-methoxy-5-(all-trans-hexaprenyl)benzoic acid. Also catalyzes the last step of ubiquinone biosynthesis by mediating methylation of 3-demethylubiquinone into ubiquinone. Also able to mediate the methylation of 3-demethylubiquinol-6 into ubiquinol-6. This chain is Ubiquinone biosynthesis O-methyltransferase, mitochondrial, found in Saccharomyces cerevisiae (strain ATCC 204508 / S288c) (Baker's yeast).